Here is a 179-residue protein sequence, read N- to C-terminus: MDVKVLRLGHRPSRDARITTHVCLTARAFGASEVILSGEEDPKLMEGVEDVVRRWGGPFSVVYRRNWQGVIDSWKKDGGEVIHLTMYGLPARDVVPGIMDNGKDKLIVVGGARVPGKVYSLADYNVGVTNQPHSEVSSLAVFMHMLLDGAEFDLKFEDARIEVIPQARGKMLREIDDGD.

Leu84 is an S-adenosyl-L-methionine binding site.

This sequence belongs to the aTrm56 family. As to quaternary structure, homodimer.

The protein localises to the cytoplasm. The catalysed reaction is cytidine(56) in tRNA + S-adenosyl-L-methionine = 2'-O-methylcytidine(56) in tRNA + S-adenosyl-L-homocysteine + H(+). Specifically catalyzes the AdoMet-dependent 2'-O-ribose methylation of cytidine at position 56 in tRNAs. This chain is tRNA (cytidine(56)-2'-O)-methyltransferase, found in Methanothermobacter thermautotrophicus (strain ATCC 29096 / DSM 1053 / JCM 10044 / NBRC 100330 / Delta H) (Methanobacterium thermoautotrophicum).